The primary structure comprises 156 residues: Small ribosomal subunit protein uS7 (156 aa).

Belongs to the universal ribosomal protein uS7 family. Part of the 30S ribosomal subunit. Contacts proteins S9 and S11.

In terms of biological role, one of the primary rRNA binding proteins, it binds directly to 16S rRNA where it nucleates assembly of the head domain of the 30S subunit. Is located at the subunit interface close to the decoding center, probably blocks exit of the E-site tRNA. This Anaeromyxobacter sp. (strain Fw109-5) protein is Small ribosomal subunit protein uS7.